Consider the following 237-residue polypeptide: Uridylate kinase (237 aa).

Residue 11-14 (KLSG) participates in ATP binding. G53 is a UMP binding site. The ATP site is built by G54 and R58. UMP-binding positions include D73 and 134 to 141 (TGNPFFTT). Residues T161, Y167, and D170 each coordinate ATP.

This sequence belongs to the UMP kinase family. In terms of assembly, homohexamer.

The protein resides in the cytoplasm. It catalyses the reaction UMP + ATP = UDP + ADP. It participates in pyrimidine metabolism; CTP biosynthesis via de novo pathway; UDP from UMP (UMPK route): step 1/1. With respect to regulation, inhibited by UTP. In terms of biological role, catalyzes the reversible phosphorylation of UMP to UDP. The polypeptide is Uridylate kinase (Nitrosomonas eutropha (strain DSM 101675 / C91 / Nm57)).